Reading from the N-terminus, the 116-residue chain is Protein Wnt-5a (116 aa).

The O-palmitoleoyl serine; by PORCN moiety is linked to residue S1. 2 N-linked (GlcNAc...) asparagine glycosylation sites follow: N69 and N83. C82 and C97 are oxidised to a cystine.

Belongs to the Wnt family. In terms of processing, palmitoleoylation is required for efficient binding to frizzled receptors. Depalmitoleoylation leads to Wnt signaling pathway inhibition.

It localises to the secreted. The protein localises to the extracellular space. It is found in the extracellular matrix. In terms of biological role, ligand for members of the frizzled family of seven transmembrane receptors. Can activate or inhibit canonical Wnt signaling, depending on receptor context. Required during embryogenesis for extension of the primary anterior-posterior axis. The polypeptide is Protein Wnt-5a (WNT5A) (Anser caerulescens (Snow goose)).